A 474-amino-acid polypeptide reads, in one-letter code: Aspartyl/glutamyl-tRNA(Asn/Gln) amidotransferase subunit B (474 aa).

It belongs to the GatB/GatE family. GatB subfamily. In terms of assembly, heterotrimer of A, B and C subunits.

The catalysed reaction is L-glutamyl-tRNA(Gln) + L-glutamine + ATP + H2O = L-glutaminyl-tRNA(Gln) + L-glutamate + ADP + phosphate + H(+). It carries out the reaction L-aspartyl-tRNA(Asn) + L-glutamine + ATP + H2O = L-asparaginyl-tRNA(Asn) + L-glutamate + ADP + phosphate + 2 H(+). Its function is as follows. Allows the formation of correctly charged Asn-tRNA(Asn) or Gln-tRNA(Gln) through the transamidation of misacylated Asp-tRNA(Asn) or Glu-tRNA(Gln) in organisms which lack either or both of asparaginyl-tRNA or glutaminyl-tRNA synthetases. The reaction takes place in the presence of glutamine and ATP through an activated phospho-Asp-tRNA(Asn) or phospho-Glu-tRNA(Gln). This chain is Aspartyl/glutamyl-tRNA(Asn/Gln) amidotransferase subunit B, found in Persephonella marina (strain DSM 14350 / EX-H1).